Here is a 516-residue protein sequence, read N- to C-terminus: MFLAKNLKNNKIKVCLPKKKFAALSTASIQTNERPNPDKVLKDIAKYVHETPLKSSLALDTARLCFLDTLGCGLAALKFKQAQNIIKPIVPGTIVPSGTKILGTSYVMDPVKGAFAIGTLIRWLDYNDCWLAAEWGHPSDNLGGILAVADHLSRLNKATHGKNGKQFLVKDVLEAMIKAHEIQGIIALENSFNKVGLDHVVLVKVATAGVVSKMLGLSQEQTIEALSQAFVDGQSLRTYRHAPNTGSRKSWAAGDAVSRAVNLAYLVKNANVGTIPSVLTARTWGFYDVLFKGKPFSFQQRSKYDSYVMENVLFKISFPAEFHAQTAVEAAVKAYRILAKQGKTFKDIKSIRIRTQEAAMRIIDKSGPLYNYADRDHCIQYMIAVPLITGNLTATDYSDEVARNPEIDNLRSKMYCIEDTHLTQNYHDPDKRSIGNALLIELNDGTQLDEIFVEYPVGHKFRREEGIPLLMNKFQRHLREHFVESPDKVDLIMKVSSKTNFLNMQIDKYMDLFTEG.

It belongs to the PrpD family.

The enzyme catalyses (2S,3S)-2-methylcitrate = 2-methyl-cis-aconitate + H2O. The protein operates within organic acid metabolism; propanoate degradation. In terms of biological role, catalyzes the stereospecific dehydration of (2S,3S)-2-methylcitrate (2-MC) to yield the cis isomer of 2-methyl-aconitate. The chain is Probable 2-methylcitrate dehydratase (PDH1) from Saccharomyces cerevisiae (strain ATCC 204508 / S288c) (Baker's yeast).